The primary structure comprises 318 residues: Inactive dihydropteroate synthase 2 (318 aa).

The interval 1-25 (MRSTPPASAGRSTPPALAGHSTPPA) is disordered. The Pterin-binding domain occupies 42-299 (ALIMAIVNRT…EVAATRRVLE (258 aa)).

The protein belongs to the DHPS family. In terms of assembly, homodimer.

Functionally, has very low affinity for the DHPS substrate 6-hydroxymethyl-7,8-dihydropterin-pyrophosphate, but can bind the inhibitor dapsone. Seems to lack dihydropteroate synthase activity, and does probably not function in folate metabolism. The chain is Inactive dihydropteroate synthase 2 (folP2) from Mycobacterium bovis (strain ATCC BAA-935 / AF2122/97).